Here is a 306-residue protein sequence, read N- to C-terminus: Cilia- and flagella-associated protein 73 (306 aa).

2 coiled-coil regions span residues 49–139 and 197–231; these read LQAQ…QRLE and QSEKQDEMLNLNQQRTQLVEQLEAAREHRQQWESK.

It belongs to the CFAP73 family.

The protein localises to the cytoplasm. Its subcellular location is the cytoskeleton. It is found in the cilium axoneme. Its function is as follows. May play a role in ciliary/flagellar motility by regulating the assembly and the activity of axonemal inner dynein arm. The sequence is that of Cilia- and flagella-associated protein 73 from Mus musculus (Mouse).